A 77-amino-acid polypeptide reads, in one-letter code: NAD(P)H-quinone oxidoreductase subunit L (77 aa).

The next 2 membrane-spanning stretches (helical) occupy residues 12-32 (LIAY…LLFY) and 47-67 (LGIY…SPFL).

It belongs to the complex I NdhL subunit family. As to quaternary structure, NDH-1 can be composed of about 15 different subunits; different subcomplexes with different compositions have been identified which probably have different functions.

Its subcellular location is the cellular thylakoid membrane. It carries out the reaction a plastoquinone + NADH + (n+1) H(+)(in) = a plastoquinol + NAD(+) + n H(+)(out). The enzyme catalyses a plastoquinone + NADPH + (n+1) H(+)(in) = a plastoquinol + NADP(+) + n H(+)(out). Functionally, NDH-1 shuttles electrons from an unknown electron donor, via FMN and iron-sulfur (Fe-S) centers, to quinones in the respiratory and/or the photosynthetic chain. The immediate electron acceptor for the enzyme in this species is believed to be plastoquinone. Couples the redox reaction to proton translocation, and thus conserves the redox energy in a proton gradient. Cyanobacterial NDH-1 also plays a role in inorganic carbon-concentration. This Prochlorococcus marinus (strain AS9601) protein is NAD(P)H-quinone oxidoreductase subunit L.